We begin with the raw amino-acid sequence, 98 residues long: Pancreatic polypeptide prohormone (98 aa).

The first 29 residues, 1-29 (MAVAYYCLSLFLLSTWVALLLQPLQGAWG), serve as a signal peptide directing secretion. Position 65 is a tyrosine amide (Tyr65).

The protein belongs to the NPY family. Post-translationally, no icosapeptide-like peptide is cleaved from the C-terminal.

Its subcellular location is the secreted. Hormone secreted by pancreatic cells that acts as a regulator of pancreatic and gastrointestinal functions probably by signaling through the G protein-coupled receptor NPY4R2. In Rattus norvegicus (Rat), this protein is Pancreatic polypeptide prohormone (Ppy).